Reading from the N-terminus, the 585-residue chain is Aspartate--tRNA ligase (585 aa).

Residue Glu173 coordinates L-aspartate. The aspartate stretch occupies residues 197 to 200 (QTLK). Arg219 is an L-aspartate binding site. Residues 219-221 (RDE) and Gln228 contribute to the ATP site. An L-aspartate-binding site is contributed by His446. Glu480 lines the ATP pocket. Residue Arg487 participates in L-aspartate binding. 532 to 535 (GLDR) contacts ATP.

This sequence belongs to the class-II aminoacyl-tRNA synthetase family. Type 1 subfamily. As to quaternary structure, homodimer.

It localises to the cytoplasm. The catalysed reaction is tRNA(Asp) + L-aspartate + ATP = L-aspartyl-tRNA(Asp) + AMP + diphosphate. In terms of biological role, catalyzes the attachment of L-aspartate to tRNA(Asp) in a two-step reaction: L-aspartate is first activated by ATP to form Asp-AMP and then transferred to the acceptor end of tRNA(Asp). In Bacteroides fragilis (strain ATCC 25285 / DSM 2151 / CCUG 4856 / JCM 11019 / LMG 10263 / NCTC 9343 / Onslow / VPI 2553 / EN-2), this protein is Aspartate--tRNA ligase.